A 662-amino-acid chain; its full sequence is Rap guanine nucleotide exchange factor-like 1 (662 aa).

Positions 1 to 149 (MKPLEKFLKK…PPWAPLGAPE (149 aa)) are disordered. Residues 20-48 (VAGGPGGGLGSCGGPGGGGGPGGGGGPAG) show a composition bias toward gly residues. A compositionally biased stretch (low complexity) spans 49–64 (GQRSLQRRQSVSRLLL). The segment covering 73–82 (AEPGLEPPVP) has biased composition (pro residues). Low complexity predominate over residues 120–135 (LRSPSSYSSDELSPGE). The Ras-GEF domain occupies 424 to 660 (EPEDVANHLT…FELSYKLEAN (237 aa)).

Its function is as follows. Probable guanine nucleotide exchange factor (GEF). The chain is Rap guanine nucleotide exchange factor-like 1 (RAPGEFL1) from Homo sapiens (Human).